A 121-amino-acid chain; its full sequence is Basic phospholipase A2 homolog textilotoxin B chain (121 aa).

7 disulfide bridges follow: Cys-11–Cys-72, Cys-27–Cys-120, Cys-29–Cys-45, Cys-44–Cys-101, Cys-51–Cys-94, Cys-61–Cys-87, and Cys-80–Cys-92.

It belongs to the phospholipase A2 family. Group I subfamily. N49 sub-subfamily. As to quaternary structure, heterohexamer. 2 forms exist: 2 A or 2 B chains, 2 C chains and 2 covalently-linked D chains, and 1 A or 1 B, 1 C, 2 covalently-linked D chains and 2 differentially glycosylated covalently-linked D chains. Textilotoxin was originally described as pentameric. In terms of tissue distribution, expressed by the venom gland.

It is found in the secreted. Snake venom oligomeric phospholipase A2 that has potent presynaptic neurotoxicity. Chain B is not itself neurotoxic, but it is essential for the neurotoxicity of textilotoxin. Subunit B possesses a very low phospholipase activity. In Pseudonaja textilis (Eastern brown snake), this protein is Basic phospholipase A2 homolog textilotoxin B chain.